The following is a 152-amino-acid chain: uncharacterized protein (152 aa).

Helical transmembrane passes span 13–33, 38–58, and 69–89; these read LLWFLLVPLVVYALLLLLLFF, LIVEAIPFCYGIALMMISLFM, and WVIFGRFVLVLVVLMLSFFVI.

The protein resides in the cell membrane. This is an uncharacterized protein from Mycoplasma pneumoniae (strain ATCC 29342 / M129 / Subtype 1) (Mycoplasmoides pneumoniae).